A 358-amino-acid chain; its full sequence is MNRILIIAGGTGGHIFPALAVARELREQEVDVQWLGVKGGLEEKLVPDSFPLHLIQIKAFRGKRGLQQLLMPLRLVRAVFQAYRIIRQFKPDVILGMGGYVAGPGGLAAWITRTPLIIHEQNSIPGLTNRVLAKMAKFILQGFPDTFPQNRKVITTGNPVRTELVKMPLPQVRLAARRGPLRILVLGGSQGARSINQKMLAALSSYPRSEEIAVWHQTGQRDFEFIQKEYEKIKIEAKVDNFISDMAGAYGWADLVVCRAGALTVCEIASVGVASIFIPYPHAVDNHQFHNARFLEQAGAAIIISEESLTETDLMRWFEQFAQDRDRLLTMAENARKLAKPEAVQRVIAQCKKFYAAR.

UDP-N-acetyl-alpha-D-glucosamine-binding positions include 11–13 (TGG), N122, R161, S189, I243, 262–267 (ALTVCE), and Q288.

This sequence belongs to the glycosyltransferase 28 family. MurG subfamily.

The protein localises to the cell inner membrane. It carries out the reaction di-trans,octa-cis-undecaprenyl diphospho-N-acetyl-alpha-D-muramoyl-L-alanyl-D-glutamyl-meso-2,6-diaminopimeloyl-D-alanyl-D-alanine + UDP-N-acetyl-alpha-D-glucosamine = di-trans,octa-cis-undecaprenyl diphospho-[N-acetyl-alpha-D-glucosaminyl-(1-&gt;4)]-N-acetyl-alpha-D-muramoyl-L-alanyl-D-glutamyl-meso-2,6-diaminopimeloyl-D-alanyl-D-alanine + UDP + H(+). Its pathway is cell wall biogenesis; peptidoglycan biosynthesis. Its function is as follows. Cell wall formation. Catalyzes the transfer of a GlcNAc subunit on undecaprenyl-pyrophosphoryl-MurNAc-pentapeptide (lipid intermediate I) to form undecaprenyl-pyrophosphoryl-MurNAc-(pentapeptide)GlcNAc (lipid intermediate II). This Coxiella burnetii (strain CbuK_Q154) (Coxiella burnetii (strain Q154)) protein is UDP-N-acetylglucosamine--N-acetylmuramyl-(pentapeptide) pyrophosphoryl-undecaprenol N-acetylglucosamine transferase.